Reading from the N-terminus, the 616-residue chain is Chaperone protein HscA (616 aa).

Belongs to the heat shock protein 70 family.

In terms of biological role, chaperone involved in the maturation of iron-sulfur cluster-containing proteins. Has a low intrinsic ATPase activity which is markedly stimulated by HscB. Involved in the maturation of IscU. The protein is Chaperone protein HscA of Shigella boydii serotype 18 (strain CDC 3083-94 / BS512).